A 442-amino-acid chain; its full sequence is Probable protein phosphatase 2C 15 (442 aa).

Residues Ala35–Ile303 form the PPM-type phosphatase domain. The Mn(2+) site is built by Asp80, Gly81, Asp255, and Asp294. Over residues Lys420–Ser434 the composition is skewed to basic and acidic residues. Residues Lys420–Glu442 are disordered.

It belongs to the PP2C family. Mg(2+) serves as cofactor. The cofactor is Mn(2+).

It carries out the reaction O-phospho-L-seryl-[protein] + H2O = L-seryl-[protein] + phosphate. The enzyme catalyses O-phospho-L-threonyl-[protein] + H2O = L-threonyl-[protein] + phosphate. This is Probable protein phosphatase 2C 15 from Oryza sativa subsp. japonica (Rice).